A 488-amino-acid polypeptide reads, in one-letter code: 3-octaprenyl-4-hydroxybenzoate carboxy-lyase (488 aa).

Asn172 lines the Mn(2+) pocket. Prenylated FMN-binding positions include 175 to 177 (IYR), 189 to 191 (RWL), and 194 to 195 (RG). Residue Glu238 participates in Mn(2+) binding. Asp287 acts as the Proton donor in catalysis.

This sequence belongs to the UbiD family. Homohexamer. It depends on prenylated FMN as a cofactor. The cofactor is Mn(2+).

It localises to the cell membrane. It carries out the reaction a 4-hydroxy-3-(all-trans-polyprenyl)benzoate + H(+) = a 2-(all-trans-polyprenyl)phenol + CO2. The protein operates within cofactor biosynthesis; ubiquinone biosynthesis. In terms of biological role, catalyzes the decarboxylation of 3-octaprenyl-4-hydroxy benzoate to 2-octaprenylphenol, an intermediate step in ubiquinone biosynthesis. The polypeptide is 3-octaprenyl-4-hydroxybenzoate carboxy-lyase (Pseudomonas paraeruginosa (strain DSM 24068 / PA7) (Pseudomonas aeruginosa (strain PA7))).